The chain runs to 145 residues: MKEKLSKKRAEVKGNRSWLEEFLKPSDNEEGPPPKNKVLSNNASSQKPTHSSCIPLLRLPDKQQKVNESIKTDMLCTDKEEECPAASLLQKYTNNSEKPSGKRQCKTKHLISQDLRQGFLLTGKCYVENADGKIPLGTCFLLGLI.

A compositionally biased stretch (basic and acidic residues) spans 1–27; that stretch reads MKEKLSKKRAEVKGNRSWLEEFLKPSD. A disordered region spans residues 1-58; sequence MKEKLSKKRAEVKGNRSWLEEFLKPSDNEEGPPPKNKVLSNNASSQKPTHSSCIPLLR. Positions 38-52 are enriched in polar residues; it reads VLSNNASSQKPTHSS.

It belongs to the BCOR family.

This Homo sapiens (Human) protein is Putative BCoR-like protein 2 (BCORP1).